The primary structure comprises 267 residues: Tryptophan synthase alpha chain (267 aa).

Active-site proton acceptor residues include glutamate 43 and aspartate 54.

Belongs to the TrpA family. In terms of assembly, tetramer of two alpha and two beta chains.

It catalyses the reaction (1S,2R)-1-C-(indol-3-yl)glycerol 3-phosphate + L-serine = D-glyceraldehyde 3-phosphate + L-tryptophan + H2O. It participates in amino-acid biosynthesis; L-tryptophan biosynthesis; L-tryptophan from chorismate: step 5/5. The alpha subunit is responsible for the aldol cleavage of indoleglycerol phosphate to indole and glyceraldehyde 3-phosphate. This chain is Tryptophan synthase alpha chain, found in Bacillus subtilis subsp. natto.